Here is a 180-residue protein sequence, read N- to C-terminus: ATP synthase subunit delta (180 aa).

This sequence belongs to the ATPase delta chain family. In terms of assembly, F-type ATPases have 2 components, F(1) - the catalytic core - and F(0) - the membrane proton channel. F(1) has five subunits: alpha(3), beta(3), gamma(1), delta(1), epsilon(1). F(0) has three main subunits: a(1), b(2) and c(10-14). The alpha and beta chains form an alternating ring which encloses part of the gamma chain. F(1) is attached to F(0) by a central stalk formed by the gamma and epsilon chains, while a peripheral stalk is formed by the delta and b chains.

Its subcellular location is the cell inner membrane. In terms of biological role, f(1)F(0) ATP synthase produces ATP from ADP in the presence of a proton or sodium gradient. F-type ATPases consist of two structural domains, F(1) containing the extramembraneous catalytic core and F(0) containing the membrane proton channel, linked together by a central stalk and a peripheral stalk. During catalysis, ATP synthesis in the catalytic domain of F(1) is coupled via a rotary mechanism of the central stalk subunits to proton translocation. Its function is as follows. This protein is part of the stalk that links CF(0) to CF(1). It either transmits conformational changes from CF(0) to CF(1) or is implicated in proton conduction. The protein is ATP synthase subunit delta of Anaplasma phagocytophilum (strain HZ).